We begin with the raw amino-acid sequence, 486 residues long: Glutamate--tRNA ligase (486 aa).

Residues 11 to 21 (PSPTGLLHIGN) carry the 'HIGH' region motif. The 'KMSKS' region motif lies at 255 to 259 (KLSKR). Lysine 258 contributes to the ATP binding site.

It belongs to the class-I aminoacyl-tRNA synthetase family. Glutamate--tRNA ligase type 1 subfamily. In terms of assembly, monomer.

The protein resides in the cytoplasm. It carries out the reaction tRNA(Glu) + L-glutamate + ATP = L-glutamyl-tRNA(Glu) + AMP + diphosphate. In terms of biological role, catalyzes the attachment of glutamate to tRNA(Glu) in a two-step reaction: glutamate is first activated by ATP to form Glu-AMP and then transferred to the acceptor end of tRNA(Glu). The sequence is that of Glutamate--tRNA ligase from Streptococcus pneumoniae (strain Hungary19A-6).